The primary structure comprises 326 residues: Acetyl-coenzyme A carboxylase carboxyl transferase subunit alpha (326 aa).

In terms of domain architecture, CoA carboxyltransferase C-terminal spans 46-300 (EIEARAAELR…KEALLRHLDE (255 aa)).

This sequence belongs to the AccA family. In terms of assembly, acetyl-CoA carboxylase is a heterohexamer composed of biotin carboxyl carrier protein (AccB), biotin carboxylase (AccC) and two subunits each of ACCase subunit alpha (AccA) and ACCase subunit beta (AccD).

It is found in the cytoplasm. The enzyme catalyses N(6)-carboxybiotinyl-L-lysyl-[protein] + acetyl-CoA = N(6)-biotinyl-L-lysyl-[protein] + malonyl-CoA. The protein operates within lipid metabolism; malonyl-CoA biosynthesis; malonyl-CoA from acetyl-CoA: step 1/1. Its function is as follows. Component of the acetyl coenzyme A carboxylase (ACC) complex. First, biotin carboxylase catalyzes the carboxylation of biotin on its carrier protein (BCCP) and then the CO(2) group is transferred by the carboxyltransferase to acetyl-CoA to form malonyl-CoA. The sequence is that of Acetyl-coenzyme A carboxylase carboxyl transferase subunit alpha from Gloeobacter violaceus (strain ATCC 29082 / PCC 7421).